Reading from the N-terminus, the 1066-residue chain is Thyrotropin-releasing hormone-degrading ectoenzyme (1066 aa).

The span at 1 to 14 (MALDGERGEQEEEK) shows a compositional bias: basic and acidic residues. Residues 1 to 43 (MALDGERGEQEEEKKKKKKKKKRKKKEEEGAEKSSSPFAATMG) form a disordered region. Topologically, residues 1-81 (MALDGERGEQ…ERHIAVHKRL (81 aa)) are cytoplasmic. Basic residues predominate over residues 15–25 (KKKKKKKKRKK). T71 carries the post-translational modification Phosphothreonine; by PKC. The helical; Signal-anchor for type II membrane protein transmembrane segment at 82–102 (VLAFAVSIVALLAVTMLAVLL) threads the bilayer. Residues 103 to 1066 (SLRFDECGAS…FQWLGKAMRH (964 aa)) are Extracellular-facing. The disordered stretch occupies residues 118-176 (TDGGLGGFPERDSNSSFPGSARRNHHAGGESSQRESGEVGTPGTPSAQPPSEEEREQWQ). Residues N131, N202, N217, N264, and N380 are each glycosylated (N-linked (GlcNAc...) asparagine). 446-450 (AAMEN) serves as a coordination point for substrate. Residue H482 coordinates Zn(2+). The Proton acceptor role is filled by E483. Zn(2+)-binding residues include H486 and E505. N-linked (GlcNAc...) asparagine glycans are attached at residues N647, N676, N691, N705, N726, N842, and N948.

Belongs to the peptidase M1 family. Homodimer; disulfide-linked. It depends on Zn(2+) as a cofactor.

Its subcellular location is the membrane. It carries out the reaction Release of the N-terminal pyroglutamyl group from pGlu-|-His-Xaa tripeptides and pGlu-|-His-Xaa-Gly tetrapeptides.. Its function is as follows. Specific inactivation of TRH after its release. In Mus musculus (Mouse), this protein is Thyrotropin-releasing hormone-degrading ectoenzyme (Trhde).